Reading from the N-terminus, the 348-residue chain is Dihydroorotate dehydrogenase (quinone) (348 aa).

FMN contacts are provided by residues 65–69 and T89; that span reads AGMDK. K69 is a binding site for substrate. 114-118 contributes to the substrate binding site; sequence NRMGF. The FMN site is built by N143 and N176. Residue N176 coordinates substrate. S179 functions as the Nucleophile in the catalytic mechanism. Residue N181 coordinates substrate. Residues K221 and T249 each coordinate FMN. Substrate is bound at residue 250–251; it reads NT. FMN contacts are provided by residues G272, G301, and 322-323; that span reads YT.

This sequence belongs to the dihydroorotate dehydrogenase family. Type 2 subfamily. As to quaternary structure, monomer. The cofactor is FMN.

It is found in the cell membrane. It catalyses the reaction (S)-dihydroorotate + a quinone = orotate + a quinol. It participates in pyrimidine metabolism; UMP biosynthesis via de novo pathway; orotate from (S)-dihydroorotate (quinone route): step 1/1. In terms of biological role, catalyzes the conversion of dihydroorotate to orotate with quinone as electron acceptor. This Akkermansia muciniphila (strain ATCC BAA-835 / DSM 22959 / JCM 33894 / BCRC 81048 / CCUG 64013 / CIP 107961 / Muc) protein is Dihydroorotate dehydrogenase (quinone).